The primary structure comprises 251 residues: Probable metal-binding protein YrpE (251 aa).

A signal peptide spans 1-30 (MNILFSKRLGILTIGSLLVLAGCQTSGSSA). Polar residues predominate over residues 25–41 (TSGSSAGESNQTTSSSA). The segment at 25–72 (TSGSSAGESNQTTSSSAVEEDSSKTQEQTSDSHTHEHSHDHSHAHDEE) is disordered. The segment covering 54–72 (SDSHTHEHSHDHSHAHDEE) has biased composition (basic and acidic residues). Residues His203, His212, His214, Glu247, and His251 each coordinate Zn(2+).

The protein belongs to the calycin superfamily. ZinT family.

This is Probable metal-binding protein YrpE (yrpE) from Bacillus subtilis (strain 168).